Here is a 221-residue protein sequence, read N- to C-terminus: Large ribosomal subunit protein bL25 (221 aa).

A disordered region spans residues 174–221 (SVVTVVPPTDEPTEEEVEAMEGEAATEEPEVVGEEKEEDSEEENKDEE). Residues 184–221 (EPTEEEVEAMEGEAATEEPEVVGEEKEEDSEEENKDEE) are compositionally biased toward acidic residues.

The protein belongs to the bacterial ribosomal protein bL25 family. CTC subfamily. Part of the 50S ribosomal subunit; part of the 5S rRNA/L5/L18/L25 subcomplex. Contacts the 5S rRNA. Binds to the 5S rRNA independently of L5 and L18.

Functionally, this is one of the proteins that binds to the 5S RNA in the ribosome where it forms part of the central protuberance. In Staphylococcus haemolyticus (strain JCSC1435), this protein is Large ribosomal subunit protein bL25.